A 159-amino-acid polypeptide reads, in one-letter code: Ribosomal RNA large subunit methyltransferase H (159 aa).

S-adenosyl-L-methionine contacts are provided by residues Leu-76, Gly-108, and 127 to 132 (FGRLTL).

It belongs to the RNA methyltransferase RlmH family. In terms of assembly, homodimer.

Its subcellular location is the cytoplasm. It catalyses the reaction pseudouridine(1915) in 23S rRNA + S-adenosyl-L-methionine = N(3)-methylpseudouridine(1915) in 23S rRNA + S-adenosyl-L-homocysteine + H(+). In terms of biological role, specifically methylates the pseudouridine at position 1915 (m3Psi1915) in 23S rRNA. This chain is Ribosomal RNA large subunit methyltransferase H, found in Listeria monocytogenes serovar 1/2a (strain ATCC BAA-679 / EGD-e).